Reading from the N-terminus, the 278-residue chain is Sulfate transport system permease protein CysT (278 aa).

The next 7 membrane-spanning stretches (helical) occupy residues phenylalanine 22 to serine 42, phenylalanine 67 to valine 87, phenylalanine 102 to tyrosine 122, isoleucine 139 to valine 159, phenylalanine 188 to phenylalanine 208, serine 217 to phenylalanine 237, and alanine 246 to isoleucine 266. In terms of domain architecture, ABC transmembrane type-1 spans tyrosine 63 to isoleucine 266.

It belongs to the binding-protein-dependent transport system permease family. CysTW subfamily. In terms of assembly, the complex is composed of two ATP-binding proteins (CysA), two transmembrane proteins (CysT and CysW) and a solute-binding protein (CysP).

The protein localises to the cell inner membrane. Its function is as follows. Part of the ABC transporter complex CysAWTP (TC 3.A.1.6.1) involved in sulfate/thiosulfate import. Probably responsible for the translocation of the substrate across the membrane. The protein is Sulfate transport system permease protein CysT (cysT) of Synechococcus elongatus (strain ATCC 33912 / PCC 7942 / FACHB-805) (Anacystis nidulans R2).